Consider the following 340-residue polypeptide: Ferrochelatase (340 aa).

The Fe cation site is built by H189 and E292.

It belongs to the ferrochelatase family.

It localises to the cytoplasm. The enzyme catalyses heme b + 2 H(+) = protoporphyrin IX + Fe(2+). The protein operates within porphyrin-containing compound metabolism; protoheme biosynthesis; protoheme from protoporphyrin-IX: step 1/1. Functionally, catalyzes the ferrous insertion into protoporphyrin IX. The polypeptide is Ferrochelatase (Pseudomonas fluorescens biotype C).